The sequence spans 406 residues: Sorting nexin-6 (406 aa).

Position 1 is an N-acetylmethionine (Met-1). An N-acetylmethionine; in Sorting nexin-6, N-terminally processed modification is found at Met-2. Residues 2 to 179 form an interaction with PIM1 region; sequence MEGLDDGPDF…NQDLSVRGKN (178 aa). The 148-residue stretch at 26–173 folds into the PX domain; it reads LQSDAALQVD…HVFLEYNQDL (148 aa). A 1,2-diacyl-sn-glycero-3-phospho-(1D-myo-inositol-4,5-bisphosphate) contacts are provided by residues 41–47, 100–106, and 114–117; these read SERDRVK, FDASREK, and EGSM. 2 positions are modified to phosphoserine: Ser-116 and Ser-194. Residues 182–199 form a membrane-binding amphipathic helix region; the sequence is EKLEDFFKNMVKSADGVI. The 204-residue stretch at 203 to 406 folds into the BAR domain; that stretch reads VKDVDDFFEH…NCLAVLNGDT (204 aa).

Belongs to the sorting nexin family. In terms of assembly, forms heterodimers with BAR domain-containing sorting nexins SNX1 and SNX2. The heterodimers are proposed to self-assemble into helical arrays on the membrane to stabilize and expand local membrane curvature underlying endosomal tubule formation. Thought to be a component of the originally described retromer complex (also called SNX-BAR retromer) which is a pentamer containing the heterotrimeric retromer cargo-selective complex (CSC), also described as vacuolar protein sorting subcomplex (VPS), and a heterodimeric membrane-deforming subcomplex formed between SNX1 or SNX2 and SNX5 or SNX6 (also called SNX-BAR subcomplex); the respective CSC and SNX-BAR subcomplexes associate with low affinity. Interacts with SNX1, SNX2, VPS26A, VPS29, VPS35, TGFB receptors, BACE1, BRMS1, PIP5K1C. Interacts with DCTN1; the association with DCTN1 is involved in movement of retromer-c ontaining vesicles toward the TGN. Interacts with PIM1; translocating SNX6 to the nucleus. Interacts with CDKN1B and GIT1. Post-translationally, in vitro phosphorylated by PIM1; not affecting PIM1-dependent nuclear translocation.

Its subcellular location is the early endosome membrane. The protein resides in the cytoplasmic vesicle. The protein localises to the cytoplasm. It is found in the nucleus. Involved in several stages of intracellular trafficking. Interacts with membranes phosphatidylinositol 3,4-bisphosphate and/or phosphatidylinositol 4,5-bisphosphate. Acts in part as component of the retromer membrane-deforming SNX-BAR subcomplex. The SNX-BAR retromer mediates retrograde transport of cargo proteins from endosomes to the trans-Golgi network (TGN) and is involved in endosome-to-plasma membrane transport for cargo protein recycling. The SNX-BAR subcomplex functions to deform the donor membrane into a tubular profile called endosome-to-TGN transport carrier (ETC). Does not have in vitro vesicle-to-membrane remodeling activity. Involved in retrograde endosome-to-TGN transport of lysosomal enzyme receptor IGF2R. May function as link between transport vesicles and dynactin. Negatively regulates retrograde transport of BACE1 from the cell surface to the trans-Golgi network. Involved in E-cadherin sorting and degradation; inhibits PIP5K1C-mediated E-cadherin degradation. In association with GIT1 involved in EGFR degradation. Promotes lysosomal degradation of CDKN1B. May contribute to transcription regulation. The protein is Sorting nexin-6 (Snx6) of Mus musculus (Mouse).